The sequence spans 122 residues: Large ribosomal subunit protein uL18 (122 aa).

It belongs to the universal ribosomal protein uL18 family. Part of the 50S ribosomal subunit; part of the 5S rRNA/L5/L18/L25 subcomplex. Contacts the 5S and 23S rRNAs.

This is one of the proteins that bind and probably mediate the attachment of the 5S RNA into the large ribosomal subunit, where it forms part of the central protuberance. The polypeptide is Large ribosomal subunit protein uL18 (Heliobacterium modesticaldum (strain ATCC 51547 / Ice1)).